Reading from the N-terminus, the 233-residue chain is Ribosomal RNA large subunit methyltransferase E (233 aa).

S-adenosyl-L-methionine-binding residues include G80, W82, D108, D124, and D148. The active-site Proton acceptor is the K188.

This sequence belongs to the class I-like SAM-binding methyltransferase superfamily. RNA methyltransferase RlmE family.

The protein localises to the cytoplasm. It catalyses the reaction uridine(2552) in 23S rRNA + S-adenosyl-L-methionine = 2'-O-methyluridine(2552) in 23S rRNA + S-adenosyl-L-homocysteine + H(+). Functionally, specifically methylates the uridine in position 2552 of 23S rRNA at the 2'-O position of the ribose in the fully assembled 50S ribosomal subunit. The sequence is that of Ribosomal RNA large subunit methyltransferase E from Ruegeria pomeroyi (strain ATCC 700808 / DSM 15171 / DSS-3) (Silicibacter pomeroyi).